Reading from the N-terminus, the 406-residue chain is Serine/threonine transporter SstT (406 aa).

9 helical membrane passes run 15-35 (LVLQ…VSPS), 47-67 (FVGA…AASI), 81-101 (IIAM…VLSF), 140-160 (ALMS…GLAL), 191-211 (FGIF…ALAG), 215-235 (LLVV…PAMV), 289-309 (IPLG…TLTL), 315-335 (MGIE…AVSA), and 362-382 (IAMQ…SAET).

Belongs to the dicarboxylate/amino acid:cation symporter (DAACS) (TC 2.A.23) family.

It localises to the cell inner membrane. It carries out the reaction L-serine(in) + Na(+)(in) = L-serine(out) + Na(+)(out). The catalysed reaction is L-threonine(in) + Na(+)(in) = L-threonine(out) + Na(+)(out). Involved in the import of serine and threonine into the cell, with the concomitant import of sodium (symport system). The protein is Serine/threonine transporter SstT of Vibrio vulnificus (strain CMCP6).